The chain runs to 389 residues: Capsule polysaccharide export protein KpsS (389 aa).

The chain is Capsule polysaccharide export protein KpsS (kpsS) from Escherichia coli.